Consider the following 214-residue polypeptide: Octanoyltransferase (214 aa).

Residues 35-211 (KSNMNFIWLG…IIHEEFNFNF (177 aa)) form the BPL/LPL catalytic domain. Residues 75 to 82 (RGGEVTCH), 142 to 144 (SIG), and 155 to 157 (GFS) each bind substrate. The active-site Acyl-thioester intermediate is the Cys173.

It belongs to the LipB family.

Its subcellular location is the cytoplasm. It catalyses the reaction octanoyl-[ACP] + L-lysyl-[protein] = N(6)-octanoyl-L-lysyl-[protein] + holo-[ACP] + H(+). Its pathway is protein modification; protein lipoylation via endogenous pathway; protein N(6)-(lipoyl)lysine from octanoyl-[acyl-carrier-protein]: step 1/2. Functionally, catalyzes the transfer of endogenously produced octanoic acid from octanoyl-acyl-carrier-protein onto the lipoyl domains of lipoate-dependent enzymes. Lipoyl-ACP can also act as a substrate although octanoyl-ACP is likely to be the physiological substrate. This chain is Octanoyltransferase, found in Prochlorococcus marinus subsp. pastoris (strain CCMP1986 / NIES-2087 / MED4).